The chain runs to 296 residues: Transmembrane protein 156 (296 aa).

At 1-4 (MTKT) the chain is on the cytoplasmic side. Residues 5 to 25 (ALLKLFVAIVITFILILPEYF) form a helical membrane-spanning segment. The Extracellular portion of the chain corresponds to 26 to 211 (KTPKERTLEL…EMDIKNITCS (186 aa)). 2 N-linked (GlcNAc...) asparagine glycosylation sites follow: Asn45 and Asn156. Residues 212–232 (MKITWYILVLLVFIFLIILTI) form a helical membrane-spanning segment. Residues 233–296 (RKILEGQRRV…QEVLPPIPEL (64 aa)) are Cytoplasmic-facing.

It is found in the membrane. The sequence is that of Transmembrane protein 156 (TMEM156) from Homo sapiens (Human).